The following is a 258-amino-acid chain: Hydroxyacylglutathione hydrolase (258 aa).

Positions 52, 54, 56, 57, 109, 126, and 164 each coordinate Zn(2+).

It belongs to the metallo-beta-lactamase superfamily. Glyoxalase II family. As to quaternary structure, monomer. Requires Zn(2+) as cofactor.

The catalysed reaction is an S-(2-hydroxyacyl)glutathione + H2O = a 2-hydroxy carboxylate + glutathione + H(+). The protein operates within secondary metabolite metabolism; methylglyoxal degradation; (R)-lactate from methylglyoxal: step 2/2. Thiolesterase that catalyzes the hydrolysis of S-D-lactoyl-glutathione to form glutathione and D-lactic acid. This is Hydroxyacylglutathione hydrolase from Xylella fastidiosa (strain 9a5c).